Here is a 158-residue protein sequence, read N- to C-terminus: Urease accessory protein UreE (158 aa).

The protein belongs to the UreE family.

It localises to the cytoplasm. Its function is as follows. Involved in urease metallocenter assembly. Binds nickel. Probably functions as a nickel donor during metallocenter assembly. The chain is Urease accessory protein UreE from Microcystis aeruginosa (strain NIES-843 / IAM M-2473).